The primary structure comprises 206 residues: Cytidylate kinase (206 aa).

Gly7–Ser15 provides a ligand contact to ATP.

It belongs to the cytidylate kinase family. Type 1 subfamily.

The protein localises to the cytoplasm. The catalysed reaction is CMP + ATP = CDP + ADP. It carries out the reaction dCMP + ATP = dCDP + ADP. The protein is Cytidylate kinase of Deinococcus radiodurans (strain ATCC 13939 / DSM 20539 / JCM 16871 / CCUG 27074 / LMG 4051 / NBRC 15346 / NCIMB 9279 / VKM B-1422 / R1).